The following is a 417-amino-acid chain: Serine--tRNA ligase (417 aa).

L-serine is bound at residue 232 to 234 (TSE). 263 to 265 (RKE) provides a ligand contact to ATP. Position 286 (E286) interacts with L-serine. 350-353 (EISS) provides a ligand contact to ATP. An L-serine-binding site is contributed by S385.

Belongs to the class-II aminoacyl-tRNA synthetase family. Type-1 seryl-tRNA synthetase subfamily. Homodimer. The tRNA molecule binds across the dimer.

It localises to the cytoplasm. The catalysed reaction is tRNA(Ser) + L-serine + ATP = L-seryl-tRNA(Ser) + AMP + diphosphate + H(+). It catalyses the reaction tRNA(Sec) + L-serine + ATP = L-seryl-tRNA(Sec) + AMP + diphosphate + H(+). It participates in aminoacyl-tRNA biosynthesis; selenocysteinyl-tRNA(Sec) biosynthesis; L-seryl-tRNA(Sec) from L-serine and tRNA(Sec): step 1/1. Functionally, catalyzes the attachment of serine to tRNA(Ser). Is also able to aminoacylate tRNA(Sec) with serine, to form the misacylated tRNA L-seryl-tRNA(Sec), which will be further converted into selenocysteinyl-tRNA(Sec). In Campylobacter hominis (strain ATCC BAA-381 / DSM 21671 / CCUG 45161 / LMG 19568 / NCTC 13146 / CH001A), this protein is Serine--tRNA ligase.